Here is a 294-residue protein sequence, read N- to C-terminus: Proteasome subunit beta 1 (294 aa).

A propeptide spans 1 to 65 (MTADRPALRT…MESGDLAPHG (65 aa)) (removed in mature form; by autocatalysis). The Nucleophile role is filled by Thr-66.

Belongs to the peptidase T1B family. As to quaternary structure, the 20S proteasome core is composed of 14 alpha and 14 beta subunits that assemble into four stacked heptameric rings, resulting in a barrel-shaped structure. The two inner rings, each composed of seven catalytic beta subunits, are sandwiched by two outer rings, each composed of seven alpha subunits. All four combinations of alpha- and beta-subunits (beta2-alpha1, beta2-alpha2, beta1-alpha2 and beta1-alpha1) yield fully assembled and proteolytically active proteasomes. The catalytic chamber with the active sites is on the inside of the barrel. Has probably a gated structure, the ends of the cylinder being occluded by the N-termini of the alpha-subunits. Is likely capped by the proteasome-associated ATPase, ARC.

The protein localises to the cytoplasm. The enzyme catalyses Cleavage of peptide bonds with very broad specificity.. It participates in protein degradation; proteasomal Pup-dependent pathway. With respect to regulation, the formation of the proteasomal ATPase ARC-20S proteasome complex, likely via the docking of the C-termini of ARC into the intersubunit pockets in the alpha-rings, may trigger opening of the gate for substrate entry. Interconversion between the open-gate and close-gate conformations leads to a dynamic regulation of the 20S proteasome proteolysis activity. Functionally, component of the proteasome core, a large protease complex with broad specificity involved in protein degradation. The R.erythropolis proteasomes are able to cleave oligopeptides after Tyr, Phe and Leu, very poorly after Arg but not after Glu. Thus, displays chymotrypsin-like activity, low trypsin-like activity but no caspase-like activity. This chain is Proteasome subunit beta 1, found in Rhodococcus erythropolis (Arthrobacter picolinophilus).